The chain runs to 86 residues: Defensin-like protein a (86 aa).

The first 23 residues, 1–23 (MRCSVLFVVSYVIMSLLISHVQG), serve as a signal peptide directing secretion. 4 disulfides stabilise this stretch: C33-C81, C43-C67, C51-C76, and C65-C78.

This sequence belongs to the DEFL family. In terms of tissue distribution, expressed specifically in anthers.

It is found in the secreted. Involved in self-incompatibility. The polypeptide is Defensin-like protein a (SCRa) (Arabidopsis lyrata (Lyre-leaved rock-cress)).